The following is a 379-amino-acid chain: Structure-specific endonuclease subunit EME2 (379 aa).

A disordered region spans residues 1–55; that stretch reads MARVGPGRAGVSCQGRGRGRGGSGQRRPPTWEISDSDAEDSAGSEAAARARDPAG. The segment at 50–266 is nuclease-like domain; forms the post-nick DNA binding interface and is involved in DNA recognition and bending; that stretch reads ARDPAGERRA…YPLKQYRESQ (217 aa). The segment at 288 to 379 is helix-hairpin-helix (2HhH); forms the pre-nick DNA binding interface and is involved in DNA recognition and bending; it reads GLQAAWRRQI…NPDLLLDLGS (92 aa).

Belongs to the EME1/MMS4 family. In terms of assembly, part of the heterodimeric MUS81-EME2 complex; the complex forms specifically during the DNA replication phase of the cell cycle.

It is found in the nucleus. Non-catalytic subunit of the structure-specific, heterodimeric DNA endonuclease MUS81-EME2 which is involved in the maintenance of genome stability. In the complex, EME2 is required for DNA cleavage, participating in DNA recognition and bending. MUS81-EME2 cleaves 3'-flaps and nicked Holliday junctions, and exhibit limited endonuclease activity with 5' flaps and nicked double-stranded DNAs. MUS81-EME2 which is active during the replication of DNA is more specifically involved in replication fork processing. Replication forks frequently encounter obstacles to their passage, including DNA base lesions, DNA interstrand cross-links, difficult-to-replicate sequences, transcription bubbles, or tightly bound proteins. One mechanism for the restart of a stalled replication fork involves nucleolytic cleavage mediated by the MUS81-EME2 endonuclease. By acting upon the stalled fork, MUS81-EME2 generates a DNA double-strand break (DSB) that can be repaired by homologous recombination, leading to the restoration of an active fork. MUS81-EME2 could also function in telomere maintenance. The protein is Structure-specific endonuclease subunit EME2 of Homo sapiens (Human).